The sequence spans 145 residues: uncharacterized protein (145 aa).

The protein belongs to the methyltransferase superfamily.

Its function is as follows. Probable methyltransferase. This is an uncharacterized protein from Schizosaccharomyces pombe (strain 972 / ATCC 24843) (Fission yeast).